We begin with the raw amino-acid sequence, 60 residues long: Cytotoxin 1 (60 aa).

4 cysteine pairs are disulfide-bonded: C3-C21, C14-C38, C42-C53, and C54-C59.

It belongs to the three-finger toxin family. Short-chain subfamily. Type IA cytotoxin sub-subfamily. In terms of assembly, monomer in solution; Homodimer and oligomer in the presence of negatively charged lipids forming a pore with a size ranging between 20 and 30 Angstroms. Expressed by the venom gland.

It is found in the secreted. The protein resides in the target cell membrane. Its function is as follows. Shows cytolytic activity on many different cells by forming pore in lipid membranes. In vivo, increases heart rate or kills the animal by cardiac arrest. In addition, it binds to heparin with high affinity, interacts with Kv channel-interacting protein 1 (KCNIP1) in a calcium-independent manner, and binds to integrin alpha-V/beta-3 (ITGAV/ITGB3) with moderate affinity. In Naja nivea (Cape cobra), this protein is Cytotoxin 1.